We begin with the raw amino-acid sequence, 367 residues long: Quinolinate synthase (367 aa).

Iminosuccinate-binding residues include His45 and Ser62. Cys109 lines the [4Fe-4S] cluster pocket. Residues 140–142 (YVN) and Ser161 each bind iminosuccinate. Cys229 contacts [4Fe-4S] cluster. Iminosuccinate is bound by residues 255–257 (HPE) and Thr272. Residue Cys319 coordinates [4Fe-4S] cluster.

The protein belongs to the quinolinate synthase family. Type 3 subfamily. The cofactor is [4Fe-4S] cluster.

Its subcellular location is the cytoplasm. The catalysed reaction is iminosuccinate + dihydroxyacetone phosphate = quinolinate + phosphate + 2 H2O + H(+). It functions in the pathway cofactor biosynthesis; NAD(+) biosynthesis; quinolinate from iminoaspartate: step 1/1. Its function is as follows. Catalyzes the condensation of iminoaspartate with dihydroxyacetone phosphate to form quinolinate. This Geobacillus kaustophilus (strain HTA426) protein is Quinolinate synthase.